A 170-amino-acid chain; its full sequence is Lipoprotein signal peptidase (170 aa).

Helical transmembrane passes span 5–25 (VYHQYWFWYLAAFVVFLLDQG), 70–90 (WFFTIVAVAASVLLIVWICRV), and 98–118 (AFALSFILGGAVGNLYDRIIH). Residues D123 and D141 contribute to the active site. Residues 137–157 (FNLADAAISLGAMVLIADLFI) form a helical membrane-spanning segment.

This sequence belongs to the peptidase A8 family.

The protein localises to the cell inner membrane. It catalyses the reaction Release of signal peptides from bacterial membrane prolipoproteins. Hydrolyzes -Xaa-Yaa-Zaa-|-(S,diacylglyceryl)Cys-, in which Xaa is hydrophobic (preferably Leu), and Yaa (Ala or Ser) and Zaa (Gly or Ala) have small, neutral side chains.. It functions in the pathway protein modification; lipoprotein biosynthesis (signal peptide cleavage). Its function is as follows. This protein specifically catalyzes the removal of signal peptides from prolipoproteins. The polypeptide is Lipoprotein signal peptidase (Cellvibrio japonicus (strain Ueda107) (Pseudomonas fluorescens subsp. cellulosa)).